Reading from the N-terminus, the 221-residue chain is Cytidylate kinase (221 aa).

Residue glycine 11 to threonine 19 coordinates ATP.

Belongs to the cytidylate kinase family. Type 1 subfamily.

The protein localises to the cytoplasm. It carries out the reaction CMP + ATP = CDP + ADP. It catalyses the reaction dCMP + ATP = dCDP + ADP. This Mycoplasmopsis pulmonis (strain UAB CTIP) (Mycoplasma pulmonis) protein is Cytidylate kinase.